The following is a 463-amino-acid chain: Phosphoglycerate transporter protein (463 aa).

Topologically, residues 1–29 are cytoplasmic; sequence MLTILKTGQSAHKVPPEKVQATYGRYRIQ. 12 consecutive transmembrane segments (helical) span residues 30-50, 59-79, 106-126, 127-147, 160-180, 188-208, 267-287, 297-317, 326-346, 349-369, 391-411, and 413-433; these read ALLS…NFTL, LDLS…AYGI, IVNV…LVVF, NGLF…NWFP, ISHN…FAIL, ASYI…LVLG, VFVY…LLTV, VAFL…GWLS, MPLA…YWKS, LLMV…PQFL, GFMS…VMVD, and LGWY…ILFC.

It belongs to the major facilitator superfamily. Organophosphate:Pi antiporter (OPA) (TC 2.A.1.4) family.

The protein localises to the cell inner membrane. In terms of biological role, the phosphoglycerate transporter protein is a part of the PGT transport system. It is the membrane bound transporter for phosphoglycerate into salmonella. The protein is Phosphoglycerate transporter protein (pgtP) of Salmonella typhimurium (strain LT2 / SGSC1412 / ATCC 700720).